The following is a 217-amino-acid chain: Thymidylate kinase (217 aa).

7–14 lines the ATP pocket; sequence GIEGTGKT.

The protein belongs to the thymidylate kinase family.

The enzyme catalyses dTMP + ATP = dTDP + ADP. Functionally, phosphorylation of dTMP to form dTDP in both de novo and salvage pathways of dTTP synthesis. In Maridesulfovibrio salexigens (strain ATCC 14822 / DSM 2638 / NCIMB 8403 / VKM B-1763) (Desulfovibrio salexigens), this protein is Thymidylate kinase.